A 346-amino-acid polypeptide reads, in one-letter code: N-acetyl-gamma-glutamyl-phosphate reductase (346 aa).

Residue cysteine 149 is part of the active site.

Belongs to the NAGSA dehydrogenase family. Type 1 subfamily.

The protein localises to the cytoplasm. It catalyses the reaction N-acetyl-L-glutamate 5-semialdehyde + phosphate + NADP(+) = N-acetyl-L-glutamyl 5-phosphate + NADPH + H(+). It functions in the pathway amino-acid biosynthesis; L-arginine biosynthesis; N(2)-acetyl-L-ornithine from L-glutamate: step 3/4. Its function is as follows. Catalyzes the NADPH-dependent reduction of N-acetyl-5-glutamyl phosphate to yield N-acetyl-L-glutamate 5-semialdehyde. In Pelobacter propionicus (strain DSM 2379 / NBRC 103807 / OttBd1), this protein is N-acetyl-gamma-glutamyl-phosphate reductase.